Consider the following 32-residue polypeptide: Calcitonin (32 aa).

An intrachain disulfide couples cysteine 1 to cysteine 7. Position 32 is a proline amide (proline 32).

Belongs to the calcitonin family.

The protein localises to the secreted. Causes a rapid but short-lived drop in the level of calcium and phosphate in blood by promoting the incorporation of those ions in the bones. The sequence is that of Calcitonin from Anguilla japonica (Japanese eel).